A 639-amino-acid chain; its full sequence is Putative cyclic beta-1,2-glucan modification protein (639 aa).

The next 6 helical transmembrane spans lie at 34–54 (ALFT…IVRW), 69–89 (PAWT…ALFG), 96–116 (LLIA…QVFL), 144–164 (WTAV…ALLL), 185–205 (FALP…FSWI), and 227–247 (FALA…AGYM).

It is found in the cell membrane. The sequence is that of Putative cyclic beta-1,2-glucan modification protein (cgmA) from Rhizobium meliloti (strain 1021) (Ensifer meliloti).